Reading from the N-terminus, the 437-residue chain is Transcription factor E2F1 (437 aa).

Disordered regions lie at residues 42 to 87 (ASAP…GRPP) and 101 to 128 (LAES…KSRY). The interval 67-108 (ATPQAPRPTPSAPRPALGRPPVKRRLDLETDHQYLAESSGPA) is cyclin A:CDK2 binding. The interaction with BIRC2/c-IAP1 stretch occupies residues 89 to 191 (KRRLDLETDH…KKSKNHIQWL (103 aa)). A DNA-binding region spans residues 110–194 (GRGRHPGKGV…KNHIQWLGSH (85 aa)). Lys-117, Lys-120, and Lys-125 each carry N6-acetyllysine. Residues 153–174 (LNWAAEVLKVQKRRIYDITNVL) are leucine-zipper. Positions 158–194 (EVLKVQKRRIYDITNVLEGIQLIAKKSKNHIQWLGSH) match the DEF box motif. Lys-185 is modified (N6-methyllysine; by SETD7). The segment at 192–382 (GSHTTVGVGG…RLSPLVAADS (191 aa)) is required for interaction with TRIM28. Residues 195–284 (TTVGVGGRLE…AVDSSENFQI (90 aa)) form a dimerization region. The disordered stretch occupies residues 300 to 349 (EETVGGISPGKTPSQEVTSEEENRATDSATIVSPPPSSPPSSLTTDPSQS). Low complexity predominate over residues 339 to 349 (PSSLTTDPSQS). Ser-364 is subject to Phosphoserine; by CHEK2. The interval 368 to 437 (PVDEDRLSPL…DFGDLTPLDF (70 aa)) is transactivation. Residue Ser-375 is modified to Phosphoserine. Ser-403 is modified (phosphoserine; by GSK3-beta). The interval 409–426 (LDYHFGLEEGEGIRDLFD) is RB1 binding. Thr-433 bears the Phosphothreonine; by GSK3-beta mark.

This sequence belongs to the E2F/DP family. In terms of assembly, component of the DRTF1/E2F transcription factor complex. Forms heterodimers with DP family members. The E2F1 complex binds specifically hypophosphorylated RB1, the interaction represses E2F1-driven transcription. During the cell cycle, RB1 becomes phosphorylated in mid-to-late G1 phase, detaches from the DRTF1/E2F complex, rendering E2F transcriptionally active. Viral oncoproteins, notably E1A, T-antigen and HPV E7, are capable of sequestering RB1, thus releasing the active complex. Interacts with TRRAP, which probably mediates its interaction with histone acetyltransferase complexes, leading to transcription activation. Binds TOPBP1 and EAPP. Interacts with ARID3A. Interacts with TRIM28; the interaction inhibits E2F1 acetylation through recruiting HDAC1 and represses its transcriptional activity. Interaction with KAT2B; the interaction acetylates E2F1 enhancing its DNA-binding and transcriptional activity. Interacts with BIRC2/c-IAP1 (via BIR domains). The complex TFDP1:E2F1 interacts with CEBPA; the interaction prevents CEBPA binding to target genes promoters and represses its transcriptional activity. Interacts with RRP1B. Interacts with HCFC1. Interacts with KMT2E; the interaction is probably indirect and is mediated via HCFC1. Interacts with DCAF5 and L3MBTL3; the interaction requires methylation at Lys-185 and is necessary to target E2F1 for ubiquitination by the CRL4-DCAF5 E3 ubiquitin ligase complex. (Microbial infection) Interacts with human cytomegalovirus/HHV-5 protein UL123. Phosphorylated by CDK2 and cyclin A-CDK2 in the S-phase. Phosphorylation at Ser-364 by CHEK2 stabilizes E2F1 upon DNA damage and regulates its effect on transcription and apoptosis. Phosphorylation at Ser-403 by GSK3B promotes interaction with USP11, leading to its deubiquitination and stabilization. Post-translationally, ubiquitinated via 'Lys-63'-linked ubiquitin, leading to its degradation. Deubiquitinated by USP11 following phosphorylation by GSK3B, promoting its stability. In terms of processing, acetylation stimulates DNA-binding. Enhanced under stress conditions such as DNA damage and inhibited by retinoblastoma protein RB1. Regulated by KAP1/TRIM28 which recruits HDAC1 to E2F1 resulting in deacetylation. Acetylated by P/CAF/KAT2B. Methylation at Lys-185 by SETD7 promotes E2F1 ubiquitin-dependent proteasomal degradation.

The protein localises to the nucleus. With respect to regulation, BIRC2/c-IAP1 stimulates its transcriptional activity. In terms of biological role, transcription activator that binds DNA cooperatively with DP proteins through the E2 recognition site, 5'-TTTC[CG]CGC-3' found in the promoter region of a number of genes whose products are involved in cell cycle regulation or in DNA replication. The DRTF1/E2F complex functions in the control of cell-cycle progression from G1 to S phase. E2F1 binds preferentially RB1 in a cell-cycle dependent manner. It can mediate both cell proliferation and TP53/p53-dependent apoptosis. Blocks adipocyte differentiation by binding to specific promoters repressing CEBPA binding to its target gene promoters. Directly activates transcription of PEG10. Positively regulates transcription of RRP1B. This is Transcription factor E2F1 from Homo sapiens (Human).